Reading from the N-terminus, the 395-residue chain is 8-amino-3,8-dideoxy-alpha-D-manno-octulosonate transaminase (395 aa).

The residue at position 186 (lysine 186) is an N6-(pyridoxal phosphate)lysine.

It belongs to the DegT/DnrJ/EryC1 family. The cofactor is pyridoxal 5'-phosphate.

It carries out the reaction 8-amino-3,8-dideoxy-alpha-D-manno-octulosonate + 2-oxoglutarate = 3,8-dideoxy-8-oxo-alpha-D-manno-octulosonate + L-glutamate. It functions in the pathway bacterial outer membrane biogenesis; lipopolysaccharide biosynthesis. In terms of biological role, catalyzes the second (last) step of the biosynthesis of Kdo8N (8-amino-3,8-dideoxy-D-manno-octulosonate) from Kdo (3-deoxy-D-manno-octulosonate). This chain is 8-amino-3,8-dideoxy-alpha-D-manno-octulosonate transaminase, found in Shewanella oneidensis (strain ATCC 700550 / JCM 31522 / CIP 106686 / LMG 19005 / NCIMB 14063 / MR-1).